The sequence spans 436 residues: Arginine-hydroxylase NDUFAF5, mitochondrial (436 aa).

Residues 1 to 25 constitute a mitochondrion transit peptide; it reads MLRTTFRKGFNLKCFSKDWNQTRQY. The tract at residues 365-436 is disordered; the sequence is VTLSQQQQQQ…DEINKNKDDK (72 aa). Positions 369–380 are enriched in low complexity; sequence QQQQQQGIEPQQ. 2 stretches are compositionally biased toward basic and acidic residues: residues 391 to 411 and 421 to 436; these read PKTD…HFEK and QNKE…KDDK.

This sequence belongs to the methyltransferase superfamily.

The protein resides in the mitochondrion. Involved in the assembly of mitochondrial NADH:ubiquinone oxidoreductase complex (complex I, MT-ND1) at early stages. Probably acts as an arginine hydroxylase. May also have methyltransferase activity. This Dictyostelium discoideum (Social amoeba) protein is Arginine-hydroxylase NDUFAF5, mitochondrial.